A 475-amino-acid polypeptide reads, in one-letter code: Ornithine aminotransferase, mitochondrial (475 aa).

Residues 1 to 16 constitute a mitochondrion transit peptide; the sequence is MAATTRRLLYYVSKRF. The interval 23-43 is disordered; sequence RSYGGLPQSNSKSPPSSSQRL. Residues 29–41 show a composition bias toward low complexity; it reads PQSNSKSPPSSSQ. Residues 142-143 and phenylalanine 177 each bind pyridoxal 5'-phosphate; that span reads GA. Arginine 180 contributes to the L-ornithine binding site. 265–268 lines the pyridoxal 5'-phosphate pocket; it reads DEVQ. N6-(pyridoxal phosphate)lysine is present on lysine 294. Residue serine 323 coordinates L-ornithine. Threonine 324 lines the pyridoxal 5'-phosphate pocket.

This sequence belongs to the class-III pyridoxal-phosphate-dependent aminotransferase family. Homotetramer. The cofactor is pyridoxal 5'-phosphate.

It localises to the mitochondrion matrix. The enzyme catalyses a 2-oxocarboxylate + L-ornithine = L-glutamate 5-semialdehyde + an L-alpha-amino acid. The protein operates within amino-acid biosynthesis; L-proline biosynthesis; L-glutamate 5-semialdehyde from L-ornithine: step 1/1. Mediates degradation of arginine for nitrogen recycling. Plays a role in non-host disease resistance by regulating pyrroline-5-carboxylate metabolism-induced hypersensitive response. This chain is Ornithine aminotransferase, mitochondrial, found in Arabidopsis thaliana (Mouse-ear cress).